Consider the following 268-residue polypeptide: Tryptophan synthase alpha chain (268 aa).

Active-site proton acceptor residues include E49 and D60.

The protein belongs to the TrpA family. In terms of assembly, tetramer of two alpha and two beta chains.

It carries out the reaction (1S,2R)-1-C-(indol-3-yl)glycerol 3-phosphate + L-serine = D-glyceraldehyde 3-phosphate + L-tryptophan + H2O. The protein operates within amino-acid biosynthesis; L-tryptophan biosynthesis; L-tryptophan from chorismate: step 5/5. In terms of biological role, the alpha subunit is responsible for the aldol cleavage of indoleglycerol phosphate to indole and glyceraldehyde 3-phosphate. The protein is Tryptophan synthase alpha chain of Haemophilus influenzae (strain ATCC 51907 / DSM 11121 / KW20 / Rd).